Consider the following 59-residue polypeptide: Insertion element IS986 uncharacterized 6.6 kDa protein (59 aa).

Residues 1–26 (MRKWVRQAQVDAGARPGTTTEESAEI) form a disordered region.

Belongs to the transposase 8 family.

The sequence is that of Insertion element IS986 uncharacterized 6.6 kDa protein from Mycobacterium tuberculosis.